The chain runs to 341 residues: Protein phosphatase methylesterase 1 (341 aa).

A disordered region spans residues 1–24 (MAFRKEELSQTLYENESEQSSETK). Over residues 9–20 (SQTLYENESEQS) the composition is skewed to polar residues. Active-site residues include Ser153, Asp178, and His304.

Belongs to the AB hydrolase superfamily.

The enzyme catalyses [phosphatase 2A protein]-C-terminal L-leucine methyl ester + H2O = [phosphatase 2A protein]-C-terminal L-leucine + methanol + H(+). Its function is as follows. Demethylates proteins that have been reversibly carboxymethylated. Demethylates the phosphatase PP2A catalytic subunit. This Schizosaccharomyces pombe (strain 972 / ATCC 24843) (Fission yeast) protein is Protein phosphatase methylesterase 1 (ppe1).